The following is a 469-amino-acid chain: Cytosolic Fe-S cluster assembly factor NAR1 (469 aa).

Residues Cys-20, Cys-56, Cys-59, Cys-62, Cys-168, Cys-215, Cys-394, and Cys-398 each coordinate [4Fe-4S] cluster.

It belongs to the NARF family.

Functionally, component of the cytosolic Fe/S protein assembly machinery. Required for maturation of extramitochondrial Fe/S proteins. May play a role in the transfer of pre-assembled Fe/S clusters to target apoproteins. This Kluyveromyces lactis (strain ATCC 8585 / CBS 2359 / DSM 70799 / NBRC 1267 / NRRL Y-1140 / WM37) (Yeast) protein is Cytosolic Fe-S cluster assembly factor NAR1 (NAR1).